A 136-amino-acid polypeptide reads, in one-letter code: Nucleoside diphosphate kinase (136 aa).

Residues K10, F58, R86, T92, R104, and N114 each coordinate ATP. The active-site Pros-phosphohistidine intermediate is the H117.

Belongs to the NDK family. As to quaternary structure, homotetramer. The cofactor is Mg(2+).

Its subcellular location is the cytoplasm. The enzyme catalyses a 2'-deoxyribonucleoside 5'-diphosphate + ATP = a 2'-deoxyribonucleoside 5'-triphosphate + ADP. It catalyses the reaction a ribonucleoside 5'-diphosphate + ATP = a ribonucleoside 5'-triphosphate + ADP. Major role in the synthesis of nucleoside triphosphates other than ATP. The ATP gamma phosphate is transferred to the NDP beta phosphate via a ping-pong mechanism, using a phosphorylated active-site intermediate. This is Nucleoside diphosphate kinase from Corynebacterium jeikeium (strain K411).